The chain runs to 283 residues: Acetylglutamate kinase (283 aa).

Residues 64–65 (GG), Arg-86, and Asn-178 contribute to the substrate site.

Belongs to the acetylglutamate kinase family. ArgB subfamily.

The protein resides in the cytoplasm. The catalysed reaction is N-acetyl-L-glutamate + ATP = N-acetyl-L-glutamyl 5-phosphate + ADP. The protein operates within amino-acid biosynthesis; L-arginine biosynthesis; N(2)-acetyl-L-ornithine from L-glutamate: step 2/4. Functionally, catalyzes the ATP-dependent phosphorylation of N-acetyl-L-glutamate. The chain is Acetylglutamate kinase from Lactococcus lactis subsp. cremoris (strain MG1363).